Here is a 477-residue protein sequence, read N- to C-terminus: Aspartyl/glutamyl-tRNA(Asn/Gln) amidotransferase subunit B (477 aa).

It belongs to the GatB/GatE family. GatB subfamily. Heterotrimer of A, B and C subunits.

The enzyme catalyses L-glutamyl-tRNA(Gln) + L-glutamine + ATP + H2O = L-glutaminyl-tRNA(Gln) + L-glutamate + ADP + phosphate + H(+). It carries out the reaction L-aspartyl-tRNA(Asn) + L-glutamine + ATP + H2O = L-asparaginyl-tRNA(Asn) + L-glutamate + ADP + phosphate + 2 H(+). In terms of biological role, allows the formation of correctly charged Asn-tRNA(Asn) or Gln-tRNA(Gln) through the transamidation of misacylated Asp-tRNA(Asn) or Glu-tRNA(Gln) in organisms which lack either or both of asparaginyl-tRNA or glutaminyl-tRNA synthetases. The reaction takes place in the presence of glutamine and ATP through an activated phospho-Asp-tRNA(Asn) or phospho-Glu-tRNA(Gln). The chain is Aspartyl/glutamyl-tRNA(Asn/Gln) amidotransferase subunit B from Coxiella burnetii (strain CbuK_Q154) (Coxiella burnetii (strain Q154)).